Here is a 248-residue protein sequence, read N- to C-terminus: Gas vesicle protein J (248 aa).

Residues 121–140 form a 1; truncated repeat; sequence DVKDDLYQTSAKIPSPVDTP. The interval 121–245 is 6 X 21 AA approximate tandem repeats; sequence DVKDDLYQTS…EEIPSSVDPA (125 aa). 5 repeat units span residues 141–161, 162–182, 183–203, 204–224, and 225–245.

This sequence belongs to the gas vesicle GvpA family. As to quaternary structure, interacts with GvpA.

It localises to the gas vesicle. A minor component of the gas vesicle, might be involved in nucleating gas vesicle formation. Gas vesicles (GV) are hollow, gas filled proteinaceous nanostructures. During planktonic growth they allow positioning of the organism at a favorable depth for light or nutrient acquisition. The protein is Gas vesicle protein J of Dolichospermum flosaquae (Anabaena flos-aquae).